A 932-amino-acid chain; its full sequence is RNA-binding protein 12 (932 aa).

The disordered stretch occupies residues 96-116 (DIPPANASRSGPPPSSGMSSR). Over residues 98–116 (PPANASRSGPPPSSGMSSR) the composition is skewed to low complexity. Residues 304-379 (LYVSVHGMPF…RYVEVSPATE (76 aa)) enclose the RRM 1 domain. Phosphoserine is present on residues Ser-352 and Ser-375. 2 stretches are compositionally biased toward polar residues: residues 392-401 (KQNMGPSGQT) and 408-417 (LPRSKSPSGQ). The interval 392 to 424 (KQNMGPSGQTHPPPQTLPRSKSPSGQKRSRSRS) is disordered. Phosphoserine occurs at positions 420, 422, and 424. The region spanning 430–507 (FCVYLKGLPF…RFIQVHPITK (78 aa)) is the RRM 2 domain. Ser-525 carries the phosphoserine modification. The span at 717–734 (NGPPFNFPGNFGGSNAFG) shows a compositional bias: low complexity. The disordered stretch occupies residues 717-853 (NGPPFNFPGN…PGFASSSGKP (137 aa)). The span at 783 to 811 (SGFGGGPQNFGNGPGSLGGPPGFGSGPPG) shows a compositional bias: gly residues. Pro residues predominate over residues 824-836 (AFGPGPGPGPGPG). In terms of domain architecture, RRM 3 spans 856–932 (TVIKVQNMPF…GSRKVKLVLG (77 aa)).

The protein resides in the nucleus. The protein is RNA-binding protein 12 (RBM12) of Homo sapiens (Human).